The sequence spans 632 residues: Golgin subfamily A member 8M (632 aa).

Residues 1–77 form a disordered region; it reads MAEETQHNKL…SSATLKDLES (77 aa). Residues 38 to 50 are compositionally biased toward polar residues; sequence TNGSIPQTATSGG. 2 coiled-coil regions span residues 86–154 and 209–421; these read LDSR…HMKR and KLEQ…SLMA. Basic and acidic residues predominate over residues 352-362; that stretch reads KQEERIQEQHK. Disordered stretches follow at residues 352-384, 422-456, and 505-524; these read KQEE…NKST, LPGE…REAM, and DAAL…DEGE. Gly residues predominate over residues 508–520; the sequence is LGGGHHQAGAQGG.

This sequence belongs to the GOLGA8 family.

The protein is Golgin subfamily A member 8M of Homo sapiens (Human).